We begin with the raw amino-acid sequence, 641 residues long: Chaperone protein DnaK (641 aa).

The residue at position 201 (T201) is a Phosphothreonine; by autocatalysis. Residues 604-622 (ASAEQGGAAPGADAGNAGK) show a composition bias toward low complexity. Residues 604 to 625 (ASAEQGGAAPGADAGNAGKAQD) form a disordered region.

Belongs to the heat shock protein 70 family.

Functionally, acts as a chaperone. This Stenotrophomonas maltophilia (strain R551-3) protein is Chaperone protein DnaK.